A 129-amino-acid chain; its full sequence is MNVEQIVEAIEKLTVAELAELVKALEEKFGVSAAAPIAVAAAAAPAAGAQQAQAEEKTEFDVLLKGFGSNKIGVIKVVREITGLGLKEAKDLVEKAGSPDAIVKSGIPKNEAEDIKKKLEEAGAEVTLK.

The protein belongs to the bacterial ribosomal protein bL12 family. As to quaternary structure, homodimer. Part of the ribosomal stalk of the 50S ribosomal subunit. Forms a multimeric L10(L12)X complex, where L10 forms an elongated spine to which 2 to 4 L12 dimers bind in a sequential fashion. Binds GTP-bound translation factors.

Functionally, forms part of the ribosomal stalk which helps the ribosome interact with GTP-bound translation factors. Is thus essential for accurate translation. The sequence is that of Large ribosomal subunit protein bL12 from Pseudothermotoga lettingae (strain ATCC BAA-301 / DSM 14385 / NBRC 107922 / TMO) (Thermotoga lettingae).